The sequence spans 407 residues: Argininosuccinate synthase (407 aa).

ATP is bound by residues 16 to 24 (AYSGGLDTS) and Ala44. Residues Tyr96 and Ser101 each contribute to the L-citrulline site. Gly126 is an ATP binding site. The L-aspartate site is built by Thr128, Asn132, and Asp133. Asn132 is an L-citrulline binding site. Residues Arg136, Ser185, Ser194, Glu270, and Tyr282 each contribute to the L-citrulline site.

Belongs to the argininosuccinate synthase family. Type 1 subfamily. As to quaternary structure, homotetramer.

It is found in the cytoplasm. It carries out the reaction L-citrulline + L-aspartate + ATP = 2-(N(omega)-L-arginino)succinate + AMP + diphosphate + H(+). It participates in amino-acid biosynthesis; L-arginine biosynthesis; L-arginine from L-ornithine and carbamoyl phosphate: step 2/3. The protein is Argininosuccinate synthase of Shewanella putrefaciens (strain CN-32 / ATCC BAA-453).